We begin with the raw amino-acid sequence, 470 residues long: Siroheme synthase (470 aa).

Residues 1–213 (MSDATDPGWF…GEHAAARQVL (213 aa)) form a precorrin-2 dehydrogenase /sirohydrochlorin ferrochelatase region. Residues 28-29 (GI) and 49-50 (PR) each bind NAD(+). The uroporphyrinogen-III C-methyltransferase stretch occupies residues 224 to 470 (GEVWLVGAGP…VVTPPPLSGT (247 aa)). S-adenosyl-L-methionine is bound at residue Pro-233. Asp-256 (proton acceptor) is an active-site residue. The active-site Proton donor is the Lys-278. S-adenosyl-L-methionine is bound by residues 309 to 311 (GGD), Ile-314, 339 to 340 (TA), Met-392, and Gly-421.

This sequence in the N-terminal section; belongs to the precorrin-2 dehydrogenase / sirohydrochlorin ferrochelatase family. In the C-terminal section; belongs to the precorrin methyltransferase family.

The catalysed reaction is uroporphyrinogen III + 2 S-adenosyl-L-methionine = precorrin-2 + 2 S-adenosyl-L-homocysteine + H(+). It carries out the reaction precorrin-2 + NAD(+) = sirohydrochlorin + NADH + 2 H(+). The enzyme catalyses siroheme + 2 H(+) = sirohydrochlorin + Fe(2+). The protein operates within cofactor biosynthesis; adenosylcobalamin biosynthesis; precorrin-2 from uroporphyrinogen III: step 1/1. Its pathway is cofactor biosynthesis; adenosylcobalamin biosynthesis; sirohydrochlorin from precorrin-2: step 1/1. It functions in the pathway porphyrin-containing compound metabolism; siroheme biosynthesis; precorrin-2 from uroporphyrinogen III: step 1/1. It participates in porphyrin-containing compound metabolism; siroheme biosynthesis; siroheme from sirohydrochlorin: step 1/1. The protein operates within porphyrin-containing compound metabolism; siroheme biosynthesis; sirohydrochlorin from precorrin-2: step 1/1. Multifunctional enzyme that catalyzes the SAM-dependent methylations of uroporphyrinogen III at position C-2 and C-7 to form precorrin-2 via precorrin-1. Then it catalyzes the NAD-dependent ring dehydrogenation of precorrin-2 to yield sirohydrochlorin. Finally, it catalyzes the ferrochelation of sirohydrochlorin to yield siroheme. The protein is Siroheme synthase of Gluconacetobacter diazotrophicus (strain ATCC 49037 / DSM 5601 / CCUG 37298 / CIP 103539 / LMG 7603 / PAl5).